Here is a 150-residue protein sequence, read N- to C-terminus: Large ribosomal subunit protein bL9 (150 aa).

Belongs to the bacterial ribosomal protein bL9 family.

Functionally, binds to the 23S rRNA. This Streptococcus mutans serotype c (strain ATCC 700610 / UA159) protein is Large ribosomal subunit protein bL9.